A 431-amino-acid polypeptide reads, in one-letter code: Tol-Pal system protein TolB (431 aa).

Positions 1–26 (MSLMTKLGFRALVASCLITAGSAANA) are cleaved as a signal peptide. The interval 406–431 (DGSAPPQILSVQGGSVREPSWGPFMQ) is disordered.

This sequence belongs to the TolB family. The Tol-Pal system is composed of five core proteins: the inner membrane proteins TolA, TolQ and TolR, the periplasmic protein TolB and the outer membrane protein Pal. They form a network linking the inner and outer membranes and the peptidoglycan layer.

It is found in the periplasm. Functionally, part of the Tol-Pal system, which plays a role in outer membrane invagination during cell division and is important for maintaining outer membrane integrity. In Burkholderia cenocepacia (strain HI2424), this protein is Tol-Pal system protein TolB.